Reading from the N-terminus, the 103-residue chain is ATLAPTVLIFPPAPAQLATGAVTIVCVANKYFPDGTVTWEVDGKPLTTGIETSKTPQNSDDCTYNLSSTLTLQKSNYNSHNEYTCQVAQGAGSVVQSFSRKNC.

The Ig-like domain maps to 5–99 (PTVLIFPPAP…GAGSVVQSFS (95 aa)). C26 and C85 are oxidised to a cystine.

The protein is Ig kappa-b5 chain C region of Oryctolagus cuniculus (Rabbit).